A 371-amino-acid chain; its full sequence is Glutamate 5-kinase (371 aa).

K11 lines the ATP pocket. Substrate is bound by residues S52, D139, and N151. ATP is bound by residues 171-172 and 213-219; these read TD and TGGMATK. Positions 278–356 constitute a PUA domain; sequence EGSLTLDEGA…AEIPRILGYE (79 aa).

It belongs to the glutamate 5-kinase family.

Its subcellular location is the cytoplasm. The enzyme catalyses L-glutamate + ATP = L-glutamyl 5-phosphate + ADP. It participates in amino-acid biosynthesis; L-proline biosynthesis; L-glutamate 5-semialdehyde from L-glutamate: step 1/2. Functionally, catalyzes the transfer of a phosphate group to glutamate to form L-glutamate 5-phosphate. This chain is Glutamate 5-kinase, found in Synechococcus sp. (strain JA-2-3B'a(2-13)) (Cyanobacteria bacterium Yellowstone B-Prime).